The primary structure comprises 540 residues: Chaperonin GroEL (540 aa).

ATP-binding positions include 29–32 (TLGP), 86–90 (DGTTT), G413, 476–478 (NAA), and D492.

It belongs to the chaperonin (HSP60) family. In terms of assembly, forms a cylinder of 14 subunits composed of two heptameric rings stacked back-to-back. Interacts with the co-chaperonin GroES.

Its subcellular location is the cytoplasm. It carries out the reaction ATP + H2O + a folded polypeptide = ADP + phosphate + an unfolded polypeptide.. In terms of biological role, together with its co-chaperonin GroES, plays an essential role in assisting protein folding. The GroEL-GroES system forms a nano-cage that allows encapsulation of the non-native substrate proteins and provides a physical environment optimized to promote and accelerate protein folding. The chain is Chaperonin GroEL from Streptococcus gordonii.